The following is a 197-amino-acid chain: CASP-like protein 1B2 (197 aa).

Ala-2 is modified (N-acetylalanine). At 2 to 17 (AREKIVVAGGTTKSWK) the chain is on the cytoplasmic side. A helical membrane pass occupies residues 18 to 38 (LLLGLRIFAFMATLAAAIVMS). The Extracellular segment spans residues 39–69 (LNKETKTLVVATIGTVPIKATLTAKFQHTPA). The chain crosses the membrane as a helical span at residues 70-90 (FVFFVIANVMVSFHNLLMIVV). The Cytoplasmic portion of the chain corresponds to 91-106 (QIFSRKLEYKGLRLLS). A helical transmembrane segment spans residues 107–127 (IAILDMLNATLVSAAANAAVF). At 128-156 (VAELGKNGNKHAKWNKVCDRFTTYCDHGA) the chain is on the extracellular side. Residues 157–177 (GAIIAAFAGVILMLLVSAVSI) form a helical membrane-spanning segment. Over 178-197 (SRLLINSKNFSTTATTTSVV) the chain is Cytoplasmic.

This sequence belongs to the Casparian strip membrane proteins (CASP) family. As to quaternary structure, homodimer and heterodimers.

The protein localises to the cell membrane. The chain is CASP-like protein 1B2 from Arabidopsis thaliana (Mouse-ear cress).